Reading from the N-terminus, the 66-residue chain is Large ribosomal subunit protein bL35 (66 aa).

Positions 1–15 (MSKMKTKSGAKKRFK) are enriched in basic residues. The interval 1–35 (MSKMKTKSGAKKRFKLTASGKVKAGQAGKRHGMIK) is disordered.

The protein belongs to the bacterial ribosomal protein bL35 family.

In Maricaulis maris (strain MCS10) (Caulobacter maris), this protein is Large ribosomal subunit protein bL35.